A 228-amino-acid chain; its full sequence is Ribosomal RNA small subunit methyltransferase G (228 aa).

Residues Gly89, Leu94, 140–141 (VE), and Arg159 contribute to the S-adenosyl-L-methionine site.

This sequence belongs to the methyltransferase superfamily. RNA methyltransferase RsmG family.

The protein localises to the cytoplasm. The enzyme catalyses guanosine(527) in 16S rRNA + S-adenosyl-L-methionine = N(7)-methylguanosine(527) in 16S rRNA + S-adenosyl-L-homocysteine. Its function is as follows. Specifically methylates the N7 position of guanine in position 527 of 16S rRNA. This Burkholderia ambifaria (strain MC40-6) protein is Ribosomal RNA small subunit methyltransferase G.